The primary structure comprises 280 residues: uncharacterized protein (280 aa).

This sequence belongs to the metallo-dependent hydrolases superfamily.

This is an uncharacterized protein from Methanocaldococcus jannaschii (strain ATCC 43067 / DSM 2661 / JAL-1 / JCM 10045 / NBRC 100440) (Methanococcus jannaschii).